Reading from the N-terminus, the 452-residue chain is MSWDEMYRDAYERVLNSIGKIKGVMLAYNTNIDAIKYLKREDLERRIEEAGKDEVLRYSDELPKKINTIQQLLGSILWSVKRGKAAELLVEDREVRNYMRQWGWDELRMGGQVGIMANLLGGVYGIPVIAHVPQISKLQASLFLDGPIYVPTFEEGLKLVHPRNFEGNEEDCIHYIYEFPRGFKVLNFTAPRENRFIGAADDYNPRLYIRKEWVERFEEIAERAELAIVSGLHSLTEETYREPIKVVREHLKVLKDLNIKTHLEFAFTADEKVRREILGLLSLVYSVGLNEVELASVLEIMNERELADRILAKDPADPVAVIEGLMKLIEEGVERIHFHTYGYYLAITKYRGEHVRDALLFSALAAATKAMLGNIEKLDDLRKGLEVPIGRQGLEVYEVVKREFNVEKGIGEVGDYQIAFVPTKIVEKPKSTVGIGDTISSSAFVSEFSLSS.

Positions 1 to 452 constitute an ADPK domain; sequence MSWDEMYRDA…AFVSEFSLSS (452 aa). Residues aspartate 33, glutamate 87, 111-112, and histidine 174 each bind D-glucose; that span reads GQ. Position 264 (glutamate 264) interacts with Mg(2+). Asparagine 290 contributes to the ADP binding site. Glutamate 293 serves as a coordination point for Mg(2+). Residues 339 to 340, valine 426, and glycine 436 contribute to the ADP site; that span reads HT. Aspartate 437 lines the D-glucose pocket. Aspartate 437 lines the Mg(2+) pocket. Aspartate 437 acts as the Proton acceptor in catalysis.

The protein belongs to the ADP-dependent glucokinase family. Mg(2+) serves as cofactor.

It is found in the cytoplasm. It catalyses the reaction D-glucose + ADP = D-glucose 6-phosphate + AMP + H(+). The enzyme catalyses D-glucosamine + ADP = D-glucosamine 6-phosphate + AMP + H(+). It functions in the pathway carbohydrate degradation; glycolysis. Functionally, catalyzes the ADP-dependent phosphorylation of D-glucose to D-glucose 6-phosphate and glucosamine to glucosamine 6-phosphate. The polypeptide is ADP-dependent glucose/glucosamine kinase (Pyrococcus abyssi (strain GE5 / Orsay)).